The chain runs to 244 residues: MTQIIPALDLIDGEVVRLVKGDYKQKKVYKYNPLKKFKEYEKAGAKELHLVDLTGAKDPSKRQLVLIEKLAKEVSVNLQVGGGIRSKEEVKALLDCGVKRVVIGSMAIKDATLCLEILKKFGSEAIVLALDTILKEDYVVAVNAWQEASDKKLMEVLDFYSNKGLKHILCTDISKDGTMQGVNVRLYKLIHEIFPKICIQASGGVASLKDLENLKGICSGVIVGKALLDGVFSVEEGIRCLQNA.

Asp9 functions as the Proton acceptor in the catalytic mechanism. Asp131 serves as the catalytic Proton donor.

Belongs to the HisA/HisF family.

The protein localises to the cytoplasm. It carries out the reaction 1-(5-phospho-beta-D-ribosyl)-5-[(5-phospho-beta-D-ribosylamino)methylideneamino]imidazole-4-carboxamide = 5-[(5-phospho-1-deoxy-D-ribulos-1-ylimino)methylamino]-1-(5-phospho-beta-D-ribosyl)imidazole-4-carboxamide. The protein operates within amino-acid biosynthesis; L-histidine biosynthesis; L-histidine from 5-phospho-alpha-D-ribose 1-diphosphate: step 4/9. This chain is 1-(5-phosphoribosyl)-5-[(5-phosphoribosylamino)methylideneamino] imidazole-4-carboxamide isomerase, found in Campylobacter jejuni subsp. doylei (strain ATCC BAA-1458 / RM4099 / 269.97).